The following is a 514-amino-acid chain: Na(+)/H(+) antiporter NhaB (514 aa).

The next 12 helical transmembrane spans lie at 23 to 43, 52 to 72, 97 to 117, 120 to 140, 144 to 164, 202 to 222, 238 to 258, 303 to 323, 353 to 373, 391 to 411, 447 to 467, and 475 to 495; these read LALL…PFIA, IFTL…LLAI, LLLM…LFIF, LLLS…AAAF, FLDA…FYGI, LMMH…VGEP, FFLR…LTCL, ALIG…VGLI, FTAL…QSLF, LFYL…VGTI, ATPN…APLI, and VWMA…CVEF.

Belongs to the NhaB Na(+)/H(+) (TC 2.A.34) antiporter family.

It is found in the cell inner membrane. The enzyme catalyses 2 Na(+)(in) + 3 H(+)(out) = 2 Na(+)(out) + 3 H(+)(in). Functionally, na(+)/H(+) antiporter that extrudes sodium in exchange for external protons. This is Na(+)/H(+) antiporter NhaB from Escherichia fergusonii (strain ATCC 35469 / DSM 13698 / CCUG 18766 / IAM 14443 / JCM 21226 / LMG 7866 / NBRC 102419 / NCTC 12128 / CDC 0568-73).